The sequence spans 224 residues: 7-cyano-7-deazaguanine synthase (224 aa).

Residue Ile9–Ala19 coordinates ATP. The Zn(2+) site is built by Cys190, Cys198, Cys201, and Cys204.

This sequence belongs to the QueC family. Zn(2+) serves as cofactor.

The catalysed reaction is 7-carboxy-7-deazaguanine + NH4(+) + ATP = 7-cyano-7-deazaguanine + ADP + phosphate + H2O + H(+). It participates in purine metabolism; 7-cyano-7-deazaguanine biosynthesis. Functionally, catalyzes the ATP-dependent conversion of 7-carboxy-7-deazaguanine (CDG) to 7-cyano-7-deazaguanine (preQ(0)). The polypeptide is 7-cyano-7-deazaguanine synthase (Campylobacter jejuni subsp. jejuni serotype O:6 (strain 81116 / NCTC 11828)).